The primary structure comprises 540 residues: Light-independent protochlorophyllide reductase subunit B (540 aa).

Residue Asp-36 coordinates [4Fe-4S] cluster. Residue Asp-292 is the Proton donor of the active site. 428-429 (GL) is a binding site for substrate. The disordered stretch occupies residues 451 to 490 (SNVASGVEPSTPSVSSEVSASSSASPEASAPTPSPDGDMV). Over residues 457–481 (VEPSTPSVSSEVSASSSASPEASAP) the composition is skewed to low complexity.

Belongs to the ChlB/BchB/BchZ family. As to quaternary structure, protochlorophyllide reductase is composed of three subunits; BchL, BchN and BchB. Forms a heterotetramer of two BchB and two BchN subunits. [4Fe-4S] cluster is required as a cofactor.

The enzyme catalyses chlorophyllide a + oxidized 2[4Fe-4S]-[ferredoxin] + 2 ADP + 2 phosphate = protochlorophyllide a + reduced 2[4Fe-4S]-[ferredoxin] + 2 ATP + 2 H2O. The protein operates within porphyrin-containing compound metabolism; bacteriochlorophyll biosynthesis (light-independent). Its function is as follows. Component of the dark-operative protochlorophyllide reductase (DPOR) that uses Mg-ATP and reduced ferredoxin to reduce ring D of protochlorophyllide (Pchlide) to form chlorophyllide a (Chlide). This reaction is light-independent. The NB-protein (BchN-BchB) is the catalytic component of the complex. The chain is Light-independent protochlorophyllide reductase subunit B from Chlorobium chlorochromatii (strain CaD3).